The primary structure comprises 183 residues: Ribosome-recycling factor (183 aa).

It belongs to the RRF family.

It localises to the cytoplasm. Its function is as follows. Responsible for the release of ribosomes from messenger RNA at the termination of protein biosynthesis. May increase the efficiency of translation by recycling ribosomes from one round of translation to another. The polypeptide is Ribosome-recycling factor (Afipia carboxidovorans (strain ATCC 49405 / DSM 1227 / KCTC 32145 / OM5) (Oligotropha carboxidovorans)).